Here is a 159-residue protein sequence, read N- to C-terminus: Large ribosomal subunit protein eL24 (159 aa).

The tract at residues 118-159 is disordered; the sequence is ANKAVRAAKAAANKEKKASQPKTQQKTAKNVKTAAPRVGGKR. Over residues 137–147 the composition is skewed to polar residues; it reads QPKTQQKTAKN.

Belongs to the eukaryotic ribosomal protein eL24 family.

The chain is Large ribosomal subunit protein eL24 from Caenorhabditis elegans.